Reading from the N-terminus, the 530-residue chain is UDP-glucuronosyltransferase 2B14 (530 aa).

The N-terminal stretch at 1–24 (MSVKHVSVLLLLLQLSCCFRTGSC) is a signal peptide. N-linked (GlcNAc...) asparagine glycosylation is found at asparagine 134 and asparagine 316. A helical transmembrane segment spans residues 494 to 510 (VVGFLVSCAAFLIFLVI).

Belongs to the UDP-glycosyltransferase family.

Its subcellular location is the microsome membrane. It localises to the endoplasmic reticulum membrane. The catalysed reaction is glucuronate acceptor + UDP-alpha-D-glucuronate = acceptor beta-D-glucuronoside + UDP + H(+). Functionally, UDPGT is of major importance in the conjugation and subsequent elimination of potentially toxic xenobiotics and endogenous compounds. The sequence is that of UDP-glucuronosyltransferase 2B14 (UGT2B14) from Oryctolagus cuniculus (Rabbit).